The following is an 889-amino-acid chain: Extended synaptotagmin-3 (889 aa).

Positions 1-65 (MAQGDPGGQT…GPRDPGQGGA (65 aa)) are disordered. Topologically, residues 1–66 (MAQGDPGGQT…PRDPGQGGAG (66 aa)) are cytoplasmic. Composition is skewed to basic and acidic residues over residues 17-28 (TDKKPDEPKATE) and 41-58 (PGGE…KGPR). The next 2 membrane-spanning stretches (helical) occupy residues 67-91 (EALA…FPVY) and 92-112 (LCGR…LWMF). The Cytoplasmic portion of the chain corresponds to 113 to 889 (WTRNKKFKLA…ELTPTGLPTS (777 aa)). Positions 155–333 (DVERVEWLNK…LPNRFTVPLS (179 aa)) constitute an SMP-LTD domain. C2 domains lie at 331–452 (PLSS…DEWF) and 468–618 (WLSL…STIK). The Ca(2+) site is built by lysine 363, aspartate 364, aspartate 376, aspartate 423, glutamate 424, aspartate 425, aspartate 427, aspartate 429, and aspartate 430. A disordered region spans residues 649 to 724 (SIKRAQSQQH…GAVPESHTPS (76 aa)). Over residues 658–671 (HKSHGKSHQAHHQA) the composition is skewed to basic residues. 2 stretches are compositionally biased toward low complexity: residues 672–682 (HQTQQNHTVQQ) and 691–714 (ISTT…PNST). The region spanning 757–879 (MTGEVEVSVR…DLVKGFTKWF (123 aa)) is the C2 3 domain. The required for phosphatidylinositol 4,5-bisphosphate-dependent location at the cell membrane stretch occupies residues 804–811 (RKWSGRKK).

It belongs to the extended synaptotagmin family.

Its subcellular location is the cell membrane. The protein localises to the endoplasmic reticulum membrane. Functionally, tethers the endoplasmic reticulum to the cell membrane and promotes the formation of appositions between the endoplasmic reticulum and the cell membrane. Binds glycerophospholipids in a barrel-like domain and may play a role in cellular lipid transport. This chain is Extended synaptotagmin-3 (esyt3), found in Xenopus tropicalis (Western clawed frog).